We begin with the raw amino-acid sequence, 310 residues long: HPr kinase/phosphorylase 1 (310 aa).

Active-site residues include H139 and K160. 154 to 161 (GQSGVGKS) is a binding site for ATP. S161 contributes to the Mg(2+) binding site. D178 serves as the catalytic Proton acceptor; for phosphorylation activity. Proton donor; for dephosphorylation activity. The interval 202-211 (LEIRGLGIIN) is important for the catalytic mechanism of both phosphorylation and dephosphorylation. Residue E203 participates in Mg(2+) binding. The active site involves R244. The important for the catalytic mechanism of dephosphorylation stretch occupies residues 265–270 (PVRPGR).

It belongs to the HPrK/P family. Homohexamer. Requires Mg(2+) as cofactor.

The enzyme catalyses [HPr protein]-L-serine + ATP = [HPr protein]-O-phospho-L-serine + ADP + H(+). It carries out the reaction [HPr protein]-O-phospho-L-serine + phosphate + H(+) = [HPr protein]-L-serine + diphosphate. Catalyzes the ATP- as well as the pyrophosphate-dependent phosphorylation of a specific serine residue in HPr, a phosphocarrier protein of the phosphoenolpyruvate-dependent sugar phosphotransferase system (PTS). HprK/P also catalyzes the pyrophosphate-producing, inorganic phosphate-dependent dephosphorylation (phosphorolysis) of seryl-phosphorylated HPr (P-Ser-HPr). The two antagonistic activities of HprK/P are regulated by several intracellular metabolites, which change their concentration in response to the absence or presence of rapidly metabolisable carbon sources (glucose, fructose, etc.) in the growth medium. Also phosphorylates/dephosphorylates the HPr-like catabolite repression protein crh on a specific serine residue. Therefore, by controlling the phosphorylation state of HPr and crh, HPrK/P is a sensor enzyme that plays a major role in the regulation of carbon metabolism and sugar transport: it mediates carbon catabolite repression (CCR), and regulates PTS-catalyzed carbohydrate uptake and inducer exclusion. The chain is HPr kinase/phosphorylase 1 (hprK1) from Oceanobacillus iheyensis (strain DSM 14371 / CIP 107618 / JCM 11309 / KCTC 3954 / HTE831).